Consider the following 376-residue polypeptide: DnaJ homolog subfamily B member 12 (376 aa).

The residue at position 1 (methionine 1) is an N-acetylmethionine. A disordered region spans residues 45 to 97 (ALIESLNQKPQSTGDHPQPTDTTHTTTKKAGGTETPSANGEAGGGESAKGYTS). Over residues 57 to 84 (TGDHPQPTDTTHTTTKKAGGTETPSANG) the composition is skewed to low complexity. The J domain occupies 111–175 (DYYEILGVSR…EKRKQYDQFG (65 aa)). Histidine 186 is modified (pros-methylhistidine). A helical transmembrane segment spans residues 243-263 (GGLGVFVQLMPILILILVSAL).

It belongs to the DnaJ family. DNAJB12/DNAJB14 subfamily. Homodimer and homotetramer. Interacts (via J domain) with HSPA8/Hsc70. Forms a multiprotein complex, at least composed of DNAJB12, DNAJB14, HSPA8/Hsc70 and SGTA; interaction with DNAJB14 and HSPA8/Hsc70 is direct. Methylated at His-186 by METTL9.

The protein resides in the endoplasmic reticulum membrane. The protein localises to the nucleus membrane. Functionally, acts as a co-chaperone with HSPA8/Hsc70; required to promote protein folding and trafficking, prevent aggregation of client proteins, and promote unfolded proteins to endoplasmic reticulum-associated degradation (ERAD) pathway. Acts by determining HSPA8/Hsc70's ATPase and polypeptide-binding activities. Can also act independently of HSPA8/Hsc70: together with DNAJB14, acts as a chaperone that promotes maturation of potassium channels KCND2 and KCNH2 by stabilizing nascent channel subunits and assembling them into tetramers. While stabilization of nascent channel proteins is dependent on HSPA8/Hsc70, the process of oligomerization of channel subunits is independent of HSPA8/Hsc70. When overexpressed, forms membranous structures together with DNAJB14 and HSPA8/Hsc70 within the nucleus; the role of these structures, named DJANGOs, is still unclear. In Mus musculus (Mouse), this protein is DnaJ homolog subfamily B member 12.